The following is a 426-amino-acid chain: Serine hydroxymethyltransferase (426 aa).

(6S)-5,6,7,8-tetrahydrofolate contacts are provided by residues leucine 113 and 117-119 (GHL). Lysine 222 carries the N6-(pyridoxal phosphate)lysine modification. A (6S)-5,6,7,8-tetrahydrofolate-binding site is contributed by 363–365 (SAF).

Belongs to the SHMT family. Homodimer. It depends on pyridoxal 5'-phosphate as a cofactor.

It localises to the cytoplasm. It catalyses the reaction (6R)-5,10-methylene-5,6,7,8-tetrahydrofolate + glycine + H2O = (6S)-5,6,7,8-tetrahydrofolate + L-serine. The protein operates within one-carbon metabolism; tetrahydrofolate interconversion. Its pathway is amino-acid biosynthesis; glycine biosynthesis; glycine from L-serine: step 1/1. Its function is as follows. Catalyzes the reversible interconversion of serine and glycine with tetrahydrofolate (THF) serving as the one-carbon carrier. This reaction serves as the major source of one-carbon groups required for the biosynthesis of purines, thymidylate, methionine, and other important biomolecules. Also exhibits THF-independent aldolase activity toward beta-hydroxyamino acids, producing glycine and aldehydes, via a retro-aldol mechanism. In Bacteroides fragilis (strain ATCC 25285 / DSM 2151 / CCUG 4856 / JCM 11019 / LMG 10263 / NCTC 9343 / Onslow / VPI 2553 / EN-2), this protein is Serine hydroxymethyltransferase.